The following is a 352-amino-acid chain: C-X-C chemokine receptor type 4 (352 aa).

The important for chemokine binding and signaling stretch occupies residues 1-21 (MEGISIYTSDNYTEEMGSGDY). Residues 1-38 (MEGISIYTSDNYTEEMGSGDYDSIKEPCFREENAHFNR) are Extracellular-facing. Tyr-7 carries the sulfotyrosine modification. Residue Asn-11 is glycosylated (N-linked (GlcNAc...) asparagine). At Tyr-12 the chain carries Sulfotyrosine. O-linked (Xyl...) (chondroitin sulfate) serine glycosylation occurs at Ser-18. Residue Tyr-21 is modified to Sulfotyrosine. Disulfide bonds link Cys-28-Cys-274 and Cys-109-Cys-186. The chain crosses the membrane as a helical span at residues 39–63 (IFLPTIYSIIFLTGIVGNGLVILVM). Residues 64–77 (GYQKKLRSMTDKYR) are Cytoplasmic-facing. Residues 78–99 (LHLSVADLLFVITLPFWAVDAV) traverse the membrane as a helical segment. The interval 94-97 (WAVD) is chemokine binding. The Extracellular segment spans residues 100-110 (ANWYFGNFLCK). A helical membrane pass occupies residues 111-130 (AVHVIYTVNLYSSVLILAFI). Positions 113–117 (HVIYT) are chemokine binding. Residues 131–154 (SLDRYLAIVHATNSQRPRKLLAEK) are Cytoplasmic-facing. An Important for signaling motif is present at residues 133–135 (DRY). An involved in dimerization; when bound to chemokine region spans residues 135 to 147 (YLAIVHATNSQRP). The chain crosses the membrane as a helical span at residues 155-174 (VVYVGVWIPALLLTIPDFIF). Over 175 to 195 (ASVSEADDRYICDRFYPNDLW) the chain is Extracellular. Residues 186 to 190 (CDRFY) form a chemokine binding, important for signaling region. The tract at residues 191 to 210 (PNDLWVVVFQFQHIMVGLIL) is involved in dimerization. Residues 196-216 (VVVFQFQHIMVGLILPGIVIL) traverse the membrane as a helical segment. Residues 217–241 (SCYCIIISKLSHSKGHQKRKALKTT) are Cytoplasmic-facing. A helical transmembrane segment spans residues 242–261 (VILILAFFACWLPYYIGISI). Residues 262 to 282 (DSFILLEIIKQGCEFENTVHK) are Extracellular-facing. Residues 266–268 (LLE) are involved in dimerization. Residues 283-302 (WISITEALAFFHCCLNPILY) traverse the membrane as a helical segment. The Cytoplasmic portion of the chain corresponds to 303 to 352 (AFLGAKFKTSAQHALTSVSRGSSLKILSKGKRGGHSSVSTESESSSFHSS). Phosphoserine is present on residues Ser-319 and Ser-321. Phosphoserine; by PKC and GRK6 is present on residues Ser-324 and Ser-325. Residues 329 to 352 (LSKGKRGGHSSVSTESESSSFHSS) are disordered. Position 330 is a phosphoserine; by GRK6 (Ser-330). Lys-331 participates in a covalent cross-link: Glycyl lysine isopeptide (Lys-Gly) (interchain with G-Cter in ubiquitin). A compositionally biased stretch (low complexity) spans 337-352 (HSSVSTESESSSFHSS). Ser-339 bears the Phosphoserine; by GRK6 mark. Phosphoserine is present on residues Ser-348 and Ser-351.

The protein belongs to the G-protein coupled receptor 1 family. Monomer. Can form homodimers. Interacts with CD164. Interacts with ARRB2; the interaction is dependent on the C-terminal phosphorylation of CXCR4 and allows activation of MAPK1 and MAPK3. Interacts with ARR3; the interaction is dependent on the C-terminal phosphorylation of CXCR4 and modulates calcium mobilization. Interacts with RNF113A; the interaction, enhanced by CXCL12, promotes CXCR4 ubiquitination and subsequent degradation. Interacts (via the cytoplasmic C-terminal) with ITCH (via the WW domains I and II); the interaction, enhanced by CXCL12, promotes CXCR4 ubiquitination and leads to its degradation. Interacts with extracellular ubiquitin. Interacts with DBN1; this interaction is enhanced by antigenic stimulation. Following LPS binding, may form a complex with GDF5, HSP90AA1 and HSPA8. Post-translationally, phosphorylated on agonist stimulation. Rapidly phosphorylated on serine and threonine residues in the C-terminal. Phosphorylation at Ser-324 and Ser-325 leads to recruitment of ITCH, ubiquitination and protein degradation. In terms of processing, ubiquitinated after ligand binding, leading to its degradation. Ubiquitinated by ITCH at the cell membrane on agonist stimulation. The ubiquitin-dependent mechanism, endosomal sorting complex required for transport (ESCRT), then targets CXCR4 for lysosomal degradation. This process is dependent also on prior Ser-/Thr-phosphorylation in the C-terminal of CXCR4. Also binding of ARRB1 to STAM negatively regulates CXCR4 sorting to lysosomes though modulating ubiquitination of SFR5S. Sulfation is required for efficient binding of CXCL12/SDF-1alpha and promotes its dimerization. Post-translationally, O- and N-glycosylated. N-glycosylation can mask coreceptor function. The O-glycosylation chondroitin sulfate attachment does not affect interaction with CXCL12/SDF-1alpha nor its coreceptor activity.

The protein localises to the cell membrane. The protein resides in the cell junction. It localises to the early endosome. Its subcellular location is the late endosome. It is found in the lysosome. Functionally, receptor for the C-X-C chemokine CXCL12/SDF-1 that transduces a signal by increasing intracellular calcium ion levels and enhancing MAPK1/MAPK3 activation. Involved in the AKT signaling cascade. Plays a role in regulation of cell migration, e.g. during wound healing. Acts as a receptor for extracellular ubiquitin; leading to enhanced intracellular calcium ions and reduced cellular cAMP levels. Binds bacterial lipopolysaccharide (LPS) et mediates LPS-induced inflammatory response, including TNF secretion by monocytes. Involved in hematopoiesis and in cardiac ventricular septum formation. Also plays an essential role in vascularization of the gastrointestinal tract, probably by regulating vascular branching and/or remodeling processes in endothelial cells. Involved in cerebellar development. In the CNS, could mediate hippocampal-neuron survival. The protein is C-X-C chemokine receptor type 4 (CXCR4) of Papio anubis (Olive baboon).